The chain runs to 269 residues: Undecaprenyl-diphosphatase (269 aa).

8 helical membrane passes run 1-21, 39-59, 86-106, 112-132, 144-164, 184-204, 210-230, and 249-269; these read MSIF…FLPI, LPIL…CTVF, LMMI…GLLL, TIDI…LIAS, VTLL…IPGI, AGEF…ILEI, LLAG…FVVG, and FAFY…GFAG.

This sequence belongs to the UppP family.

It is found in the cell inner membrane. The enzyme catalyses di-trans,octa-cis-undecaprenyl diphosphate + H2O = di-trans,octa-cis-undecaprenyl phosphate + phosphate + H(+). Its function is as follows. Catalyzes the dephosphorylation of undecaprenyl diphosphate (UPP). Confers resistance to bacitracin. The protein is Undecaprenyl-diphosphatase of Treponema denticola (strain ATCC 35405 / DSM 14222 / CIP 103919 / JCM 8153 / KCTC 15104).